The primary structure comprises 713 residues: B3 domain-containing transcription factor VAL3 (713 aa).

Positions 328 to 427 (FEKILSATDT…KLILGFRKAS (100 aa)) form a DNA-binding region, TF-B3. Disordered regions lie at residues 459–478 (VECS…SKRQ) and 616–713 (LNSD…TSSM). Positions 464–477 (GKKKSSMMITRSKR) are enriched in basic residues. Polar residues predominate over residues 616–629 (LNSDNGLHQSANNS). Over residues 663–674 (TKSETLPHDDTV) the composition is skewed to basic and acidic residues. The span at 676–688 (SSFTSPSSSSAHS) shows a compositional bias: low complexity. Positions 690–700 (NNKEDEGKLKT) are enriched in basic and acidic residues. Residues 701–713 (TTEIADTTTTSSM) show a composition bias toward low complexity.

Its subcellular location is the nucleus. May be involved in plant development. The polypeptide is B3 domain-containing transcription factor VAL3 (VAL3) (Arabidopsis thaliana (Mouse-ear cress)).